Here is a 129-residue protein sequence, read N- to C-terminus: Follitropin subunit beta (129 aa).

The signal sequence occupies residues 1–20 (MKTAQFYVLFFCWKAIWCNG). 6 disulfides stabilise this stretch: cysteine 21/cysteine 69, cysteine 35/cysteine 84, cysteine 38/cysteine 122, cysteine 46/cysteine 100, cysteine 50/cysteine 102, and cysteine 105/cysteine 112. N-linked (GlcNAc...) asparagine glycosylation is found at asparagine 25 and asparagine 42.

It belongs to the glycoprotein hormones subunit beta family. As to quaternary structure, heterodimer. The active follitropin is a heterodimer composed of an alpha chain/CGA shared with other hormones and a unique beta chain/FSHB shown here.

It localises to the secreted. Together with the alpha chain CGA constitutes follitropin, the follicle-stimulating hormone, and provides its biological specificity to the hormone heterodimer. Binds FSHR, a G protein-coupled receptor, on target cells to activate downstream signaling pathways. Follitropin is involved in follicle development and spermatogenesis in reproductive organs. The sequence is that of Follitropin subunit beta (FSHB) from Trichosurus vulpecula (Brush-tailed possum).